Consider the following 121-residue polypeptide: Large ribosomal subunit protein bL12 (121 aa).

This sequence belongs to the bacterial ribosomal protein bL12 family. In terms of assembly, homodimer. Part of the ribosomal stalk of the 50S ribosomal subunit. Forms a multimeric L10(L12)X complex, where L10 forms an elongated spine to which 2 to 4 L12 dimers bind in a sequential fashion. Binds GTP-bound translation factors.

Forms part of the ribosomal stalk which helps the ribosome interact with GTP-bound translation factors. Is thus essential for accurate translation. The chain is Large ribosomal subunit protein bL12 from Pseudomonas fluorescens (strain Pf0-1).